The chain runs to 227 residues: UPF0758 protein lpg2489 (227 aa).

The 124-residue stretch at 102 to 225 (RLSNTQQTYA…YSIFAENKWV (124 aa)) folds into the MPN domain. Residues His-173, His-175, and Asp-186 each contribute to the Zn(2+) site. The short motif at 173–186 (HNHPSGLSDASQQD) is the JAMM motif element.

This sequence belongs to the UPF0758 family.

The chain is UPF0758 protein lpg2489 from Legionella pneumophila subsp. pneumophila (strain Philadelphia 1 / ATCC 33152 / DSM 7513).